Consider the following 537-residue polypeptide: Phenylalanine--tRNA ligase beta subunit (537 aa).

The 76-residue stretch at 268-343 folds into the B5 domain; that stretch reads FNFRPYRLNL…KSYGIENVRE (76 aa). Mg(2+)-binding residues include aspartate 321, aspartate 327, glutamate 330, and aspartate 331.

It belongs to the phenylalanyl-tRNA synthetase beta subunit family. Type 2 subfamily. As to quaternary structure, tetramer of two alpha and two beta subunits. Mg(2+) serves as cofactor.

The protein resides in the cytoplasm. The catalysed reaction is tRNA(Phe) + L-phenylalanine + ATP = L-phenylalanyl-tRNA(Phe) + AMP + diphosphate + H(+). This Thermoplasma volcanium (strain ATCC 51530 / DSM 4299 / JCM 9571 / NBRC 15438 / GSS1) protein is Phenylalanine--tRNA ligase beta subunit.